The following is an 83-amino-acid chain: Mu-conotoxin-like PnMKLT1-014 (83 aa).

An N-terminal signal peptide occupies residues 1 to 22; the sequence is MNLTCMMIVAVLFLTAWTFVMA. Residues 23 to 50 constitute a propeptide that is removed on maturation; it reads DDSNNGLANLFSKSRYEMEDPEPSKLEK. 3 disulfides stabilise this stretch: C54-C72, C61-C77, and C71-C82.

Belongs to the conotoxin O1 superfamily. As to expression, expressed by the venom duct.

The protein resides in the secreted. In terms of biological role, mu-conotoxins block voltage-gated sodium channels (Nav). The sequence is that of Mu-conotoxin-like PnMKLT1-014 from Conus pennaceus (Feathered cone).